A 430-amino-acid chain; its full sequence is Hemagglutinin-esterase (430 aa).

An N-terminal signal peptide occupies residues 1–27 (MLRMRVRPPSAIPVFLIFVLLPFVLTS). The tract at residues 16–133 (LIFVLLPFVL…GSFGWVSNKV (118 aa)) is esterase domain first part. The Virion surface segment spans residues 28 to 404 (KPITPHYGPG…ENVDVTSSAY (377 aa)). Serine 49 functions as the Nucleophile in the catalytic mechanism. Residues cysteine 53 and cysteine 69 are joined by a disulfide bond. Residues asparagine 88, asparagine 117, asparagine 159, asparagine 165, asparagine 247, asparagine 268, and asparagine 289 are each glycosylated (N-linked (GlcNAc...) asparagine; by host). 3 disulfides stabilise this stretch: cysteine 120/cysteine 168, cysteine 207/cysteine 284, and cysteine 215/cysteine 257. The interval 134-274 (GFYSKLYSMA…GVYNATTFGK (141 aa)) is receptor binding. Residues 275–390 (FLIYPTKSYC…SCPQYYKLFE (116 aa)) are esterase domain second part. Cysteines 315 and 320 form a disulfide. Asparagine 324 is a glycosylation site (N-linked (GlcNAc...) asparagine; by host). Catalysis depends on charge relay system residues aspartate 336 and histidine 339. N-linked (GlcNAc...) asparagine; by host glycosylation occurs at asparagine 354. The cysteines at positions 357 and 382 are disulfide-linked. A helical membrane pass occupies residues 405 to 425 (FVATWVLLVLVIILIFILISF). The Intravirion portion of the chain corresponds to 426–430 (CLSSY).

The protein belongs to the influenza type C/coronaviruses hemagglutinin-esterase family. N-glycosylated.

It is found in the virion membrane. It localises to the host cell membrane. It catalyses the reaction N-acetyl-9-O-acetylneuraminate + H2O = N-acetylneuraminate + acetate + H(+). It carries out the reaction N-acetyl-4-O-acetylneuraminate + H2O = N-acetylneuraminate + acetate + H(+). Structural protein that makes short spikes at the surface of the virus. Contains receptor binding and receptor-destroying activities. Mediates de-O-acetylation of N-acetyl-9-O-acetylneuraminic acid, which is probably the receptor determinant recognized by the virus on the surface of erythrocytes and susceptible cells. This receptor-destroying activity is important for virus release as it probably helps preventing self-aggregation and ensures the efficient spread of the progeny virus from cell to cell. May serve as a secondary viral attachment protein for initiating infection, the spike protein being the major one. Seems to be a 'luxury' protein that is not absolutely necessary for virus infection in culture. However, its presence in the virus may alter its pathogenicity. May become a target for both the humoral and the cellular branches of the immune system. This is Hemagglutinin-esterase (HE) from Porcine torovirus (strain P10) (PoTV).